The following is a 101-amino-acid chain: Small ribosomal subunit protein uS14 (101 aa).

This sequence belongs to the universal ribosomal protein uS14 family. As to quaternary structure, part of the 30S ribosomal subunit. Contacts proteins S3 and S10.

Functionally, binds 16S rRNA, required for the assembly of 30S particles and may also be responsible for determining the conformation of the 16S rRNA at the A site. This chain is Small ribosomal subunit protein uS14, found in Paraburkholderia phymatum (strain DSM 17167 / CIP 108236 / LMG 21445 / STM815) (Burkholderia phymatum).